A 346-amino-acid chain; its full sequence is Histidinol-phosphate aminotransferase (346 aa).

Lys-209 carries the N6-(pyridoxal phosphate)lysine modification.

This sequence belongs to the class-II pyridoxal-phosphate-dependent aminotransferase family. Histidinol-phosphate aminotransferase subfamily. Homodimer. The cofactor is pyridoxal 5'-phosphate.

The catalysed reaction is L-histidinol phosphate + 2-oxoglutarate = 3-(imidazol-4-yl)-2-oxopropyl phosphate + L-glutamate. It functions in the pathway amino-acid biosynthesis; L-histidine biosynthesis; L-histidine from 5-phospho-alpha-D-ribose 1-diphosphate: step 7/9. In Aliivibrio fischeri (strain ATCC 700601 / ES114) (Vibrio fischeri), this protein is Histidinol-phosphate aminotransferase.